Consider the following 814-residue polypeptide: Outer membrane usher protein SefC (814 aa).

The signal sequence occupies residues 1–30; that stretch reads MKKTTITLFVLTSVFHSGNVFSRQYNFDYG. C792 and C813 form a disulfide bridge.

Belongs to the fimbrial export usher family.

The protein localises to the cell outer membrane. Involved in the export and assembly of the SefA fimbrial subunit. The chain is Outer membrane usher protein SefC (sefC) from Salmonella enteritidis.